A 311-amino-acid polypeptide reads, in one-letter code: S-adenosyl-L-methionine-dependent tRNA 4-demethylwyosine synthase (311 aa).

Positions 26, 39, 52, 62, 66, and 69 each coordinate [4Fe-4S] cluster. The Radical SAM core domain maps to 45–283 (YGIETHRCIQ…LKLAKMLDEN (239 aa)).

This sequence belongs to the TYW1 family. As to quaternary structure, monomer. [4Fe-4S] cluster is required as a cofactor.

The protein localises to the cytoplasm. It carries out the reaction N(1)-methylguanosine(37) in tRNA(Phe) + pyruvate + S-adenosyl-L-methionine = 4-demethylwyosine(37) in tRNA(Phe) + 5'-deoxyadenosine + L-methionine + CO2 + H2O. Functionally, component of the wyosine derivatives biosynthesis pathway that catalyzes the condensation of N-methylguanine with 2 carbon atoms from pyruvate to form the tricyclic 4-demethylwyosine (imG-14) on guanosine-37 of tRNA(Phe). The protein is S-adenosyl-L-methionine-dependent tRNA 4-demethylwyosine synthase of Methanocaldococcus jannaschii (strain ATCC 43067 / DSM 2661 / JAL-1 / JCM 10045 / NBRC 100440) (Methanococcus jannaschii).